The sequence spans 705 residues: uncharacterized protein (705 aa).

The segment at residues 24 to 52 (CHFCRVRKLKCDRVRPFCGSCSSRNRKQC) is a DNA-binding region (zn(2)-C6 fungal-type).

It localises to the nucleus. This is an uncharacterized protein from Saccharomyces cerevisiae (strain ATCC 204508 / S288c) (Baker's yeast).